The chain runs to 591 residues: Beta-fructofuranosidase, insoluble isoenzyme CWINV4 (591 aa).

An N-terminal signal peptide occupies residues 1-22 (MAISNVISVLLLLLVLINLSNQ). Residues 61 to 64 (WIND), glutamine 80, tryptophan 88, and 123 to 124 (WS) contribute to the substrate site. The active site involves aspartate 64. Residues asparagine 145 and asparagine 182 are each glycosylated (N-linked (GlcNAc...) asparagine). Substrate contacts are provided by residues 187–188 (RD), glutamate 242, and aspartate 276. Residues asparagine 336, asparagine 472, and asparagine 565 are each glycosylated (N-linked (GlcNAc...) asparagine). Cysteine 436 and cysteine 484 are disulfide-bonded.

It belongs to the glycosyl hydrolase 32 family. Expressed in flowers, and seeds, and, to a lower extent, in seedlings.

It localises to the secreted. It is found in the extracellular space. The protein localises to the apoplast. Its subcellular location is the cell wall. It carries out the reaction Hydrolysis of terminal non-reducing beta-D-fructofuranoside residues in beta-D-fructofuranosides.. The chain is Beta-fructofuranosidase, insoluble isoenzyme CWINV4 (CWINV4) from Arabidopsis thaliana (Mouse-ear cress).